A 505-amino-acid chain; its full sequence is Betaine aldehyde dehydrogenase (505 aa).

239-244 (GSTATG) lines the NAD(+) pocket. Glu-261 functions as the Proton acceptor in the catalytic mechanism. The active-site Nucleophile is the Cys-296. The short motif at 503–505 (SKL) is the Microbody targeting signal element.

Belongs to the aldehyde dehydrogenase family. Homodimer.

Its subcellular location is the peroxisome. It carries out the reaction betaine aldehyde + NAD(+) + H2O = glycine betaine + NADH + 2 H(+). The protein operates within amine and polyamine biosynthesis; betaine biosynthesis via choline pathway; betaine from betaine aldehyde: step 1/1. The polypeptide is Betaine aldehyde dehydrogenase (Hordeum vulgare (Barley)).